The following is a 30-amino-acid chain: Protein Tat (30 aa).

The disordered stretch occupies residues 1 to 30; that stretch reads PLPTTRGNPTGPKESKKEVESKTETDPFAW. The Cell attachment site motif lies at 6-8; it reads RGN. A compositionally biased stretch (basic and acidic residues) spans 13-30; that stretch reads KESKKEVESKTETDPFAW.

It belongs to the lentiviruses Tat family. Interacts with host CCNT1. Associates with the P-TEFb complex composed at least of Tat, P-TEFb (CDK9 and CCNT1), TAR RNA, RNA Pol II. Recruits the HATs CREBBP, TAF1/TFIID, EP300, PCAF and GCN5L2. Interacts with host KAT5/Tip60; this interaction targets the latter to degradation. Interacts with the host deacetylase SIRT1. Interacts with host capping enzyme RNGTT; this interaction stimulates RNGTT. Binds to host KDR, and to the host integrins ITGAV/ITGB3 and ITGA5/ITGB1. Interacts with host KPNB1/importin beta-1 without previous binding to KPNA1/importin alpha-1. Interacts with EIF2AK2. Interacts with host nucleosome assembly protein NAP1L1; this interaction may be required for the transport of Tat within the nucleus, since the two proteins interact at the nuclear rim. Interacts with host C1QBP/SF2P32; this interaction involves lysine-acetylated Tat. Interacts with the host chemokine receptors CCR2, CCR3 and CXCR4. Interacts with host DPP4/CD26; this interaction may trigger an anti-proliferative effect. Interacts with host LDLR. Interacts with the host extracellular matrix metalloproteinase MMP1. Interacts with host PRMT6; this interaction mediates Tat's methylation. Interacts with, and is ubiquitinated by MDM2/Hdm2. Interacts with host PSMC3 and HTATIP2. Interacts with STAB1; this interaction may overcome SATB1-mediated repression of IL2 and IL2RA (interleukin) in T cells by binding to the same domain than HDAC1. Interacts (when acetylated on Lys-50 and Lys-51) with human CDK13, thereby increasing HIV-1 mRNA splicing and promoting the production of the doubly spliced HIV-1 protein Nef. Post-translationally, acetylation by EP300, CREBBP, GCN5L2/GCN5 and PCAF regulates the transactivation activity of Tat. EP300-mediated acetylation of Lys-50 promotes dissociation of Tat from the TAR RNA through the competitive binding to PCAF's bromodomain. In addition, the non-acetylated Tat's N-terminus can also interact with PCAF. PCAF-mediated acetylation of Lys-28 enhances Tat's binding to CCNT1. Lys-50 is deacetylated by SIRT1. In terms of processing, phosphorylated by EIF2AK2 on serine and threonine residues adjacent to the basic region important for TAR RNA binding and function. Phosphorylation of Tat by EIF2AK2 is dependent on the prior activation of EIF2AK2 by dsRNA. Asymmetrical arginine methylation by host PRMT6 seems to diminish the transactivation capacity of Tat and affects the interaction with host CCNT1. Post-translationally, polyubiquitination by MDM2 does not target Tat to degradation, but activates its transactivation function and fosters interaction with CCNT1 and TAR RNA.

It localises to the host nucleus. It is found in the host nucleolus. Its subcellular location is the host cytoplasm. The protein localises to the secreted. Its function is as follows. Transcriptional activator that increases RNA Pol II processivity, thereby increasing the level of full-length viral transcripts. Recognizes a hairpin structure at the 5'-LTR of the nascent viral mRNAs referred to as the transactivation responsive RNA element (TAR) and recruits the cyclin T1-CDK9 complex (P-TEFb complex) that will in turn hyperphosphorylate the RNA polymerase II to allow efficient elongation. The CDK9 component of P-TEFb and other Tat-activated kinases hyperphosphorylate the C-terminus of RNA Pol II that becomes stabilized and much more processive. Other factors such as HTATSF1/Tat-SF1, SUPT5H/SPT5, and HTATIP2 are also important for Tat's function. Besides its effect on RNA Pol II processivity, Tat induces chromatin remodeling of proviral genes by recruiting the histone acetyltransferases (HATs) CREBBP, EP300 and PCAF to the chromatin. This also contributes to the increase in proviral transcription rate, especially when the provirus integrates in transcriptionally silent region of the host genome. To ensure maximal activation of the LTR, Tat mediates nuclear translocation of NF-kappa-B by interacting with host RELA. Through its interaction with host TBP, Tat may also modulate transcription initiation. Tat can reactivate a latently infected cell by penetrating in it and transactivating its LTR promoter. In the cytoplasm, Tat is thought to act as a translational activator of HIV-1 mRNAs. Functionally, extracellular circulating Tat can be endocytosed by surrounding uninfected cells via the binding to several surface receptors such as CD26, CXCR4, heparan sulfate proteoglycans (HSPG) or LDLR. Neurons are rarely infected, but they internalize Tat via their LDLR. Endosomal low pH allows Tat to cross the endosome membrane to enter the cytosol and eventually further translocate into the nucleus, thereby inducing severe cell dysfunctions ranging from cell activation to cell death. Through its interaction with nuclear HATs, Tat is potentially able to control the acetylation-dependent cellular gene expression. Tat seems to inhibit the HAT activity of KAT5/Tip60 and TAF1, and consequently modify the expression of specific cellular genes. Modulates the expression of many cellular genes involved in cell survival, proliferation or in coding for cytokines (such as IL10) or cytokine receptors. May be involved in the derepression of host interleukin IL2 expression. Mediates the activation of cyclin-dependent kinases and dysregulation of microtubule network. Tat plays a role in T-cell and neurons apoptosis. Tat induced neurotoxicity and apoptosis probably contribute to neuroAIDS. Host extracellular matrix metalloproteinase MMP1 cleaves Tat and decreases Tat's mediated neurotoxicity. Circulating Tat also acts as a chemokine-like and/or growth factor-like molecule that binds to specific receptors on the surface of the cells, affecting many cellular pathways. In the vascular system, Tat binds to ITGAV/ITGB3 and ITGA5/ITGB1 integrins dimers at the surface of endothelial cells and competes with bFGF for heparin-binding sites, leading to an excess of soluble bFGF. Binds to KDR/VEGFR-2. All these Tat-mediated effects enhance angiogenesis in Kaposi's sarcoma lesions. This Human immunodeficiency virus type 1 group M subtype A (isolate Z321) (HIV-1) protein is Protein Tat.